A 130-amino-acid chain; its full sequence is Protein ApaG (130 aa).

The ApaG domain occupies 3 to 127; that stretch reads KAETRGIMVT…FSLDSPHLRR (125 aa).

In Methylorubrum extorquens (strain CM4 / NCIMB 13688) (Methylobacterium extorquens), this protein is Protein ApaG.